Reading from the N-terminus, the 139-residue chain is Orientotoxin-2 (139 aa).

As to expression, expressed by the venom gland.

The protein resides in the secreted. It carries out the reaction a 1,2-diacyl-sn-glycero-3-phosphocholine + H2O = a 1-acyl-sn-glycero-3-phosphocholine + a fatty acid + H(+). In terms of biological role, has a highly toxic phospholipase A2 activity. The polypeptide is Orientotoxin-2 (Vespa orientalis (Oriental hornet)).